Here is a 500-residue protein sequence, read N- to C-terminus: Tektin-like protein 1 (500 aa).

A disordered region spans residues 1–25; sequence MPVLLPSTDRDQDSRVGAPEWHQAA. Phosphoserine is present on Ser14. Residues 198–229 are a coiled coil; sequence MLVWEREELKSMKRKMEKDMERSEALLKALAS. The disordered stretch occupies residues 265-286; that stretch reads VDITRPPTPRTQGLKTPPPDPV. Tyr372 is modified (phosphotyrosine). Residues 422 to 448 adopt a coiled-coil conformation; it reads LTRHNLQMEKNLKELRTTHDNLAWSLN.

Microtubule inner protein component of sperm flagellar doublet microtubules.

The protein resides in the cytoplasm. It is found in the cytoskeleton. It localises to the flagellum axoneme. Its function is as follows. Microtubule inner protein (MIP) part of the dynein-decorated doublet microtubules (DMTs) in sperm flagellar axoneme, which is required for motile flagellum beating. Forms an extensive interaction network cross-linking the lumen of axonemal doublet microtubules. The polypeptide is Tektin-like protein 1 (Rattus norvegicus (Rat)).